The chain runs to 190 residues: MASVRLFFTLISFVFIISTSVYESKVLDPPHVAESFNVSLIQKLGNTCAYTVIISTSCSSTRYTRDQISVAFGDGYGNQIYAPRLDDPSTKTFEQCSSDTFQINGPCTYQICYVYLYRSGPDGWIPNTVKIYSHGSKAVTFPYNTYVPESVWYGFNYCNSASDSNVLAIGLRRSVIILLGFVVAGTTLLL.

A signal peptide spans 1–24 (MASVRLFFTLISFVFIISTSVYES). N37 carries an N-linked (GlcNAc...) asparagine glycan. Residues 48-158 (CAYTVIISTS…ESVWYGFNYC (111 aa)) form the PLAT domain.

Interacts with EULS3 (via N-terminus). As to expression, expressed in roots, rosette leaves, stems, cauline leaves and flowers.

It is found in the secreted. In terms of biological role, may play a role during embryo development. The chain is Embryo-specific protein ATS3B from Arabidopsis thaliana (Mouse-ear cress).